A 585-amino-acid polypeptide reads, in one-letter code: MKMASSLACLLLNFHVSVFLVQLLTPCSAQFSVLGPSGPILAMVGEDADLPCHLFPTMSAETMELRWVSSSLRQVVNVYADGKEVEDRQSAPYRGRTSILRDGITAGKAALRIHNVTASDSGKYLCYFQDGDFYEKALVELKVAALGSDLHVEVKGYENGGIHLECRSTGWYPQPQIKWSDAKGENIPAVEAPVVADGVGLYAVAASVIMRGGSGGGVSCIIRNSLLGLEKTASISIADPFFTSAQPWIAALAGTLPISLLLLAGASYFLWRQQKEKIALSRETERERELKEMGYAATKQEISLREKLQDELKWRKIRYMARGEKSLAYHEWKMALFKPADVILDPDTANAILLVSEDQRSVQRAEEPRDLPDNPERFEWRYCVLGCENFTSGRHYWEVEVGDRKEWHIGVCSKNVERKKGWVKMTPENGYWTMGPTDGNKYRALTEPRTNLKLPEPPRKVGIFLDYETGEISFYNAMDGSHIYTFPHTSFSEPVYPVFRILTLEPTALTICPTPKEVDRSPNPDLVLDHSLETPVTPALANESGEPQAEVTSLLLPANAGAEGVSPSTTTSQNHKPQACTEALY.

Positions 1-29 (MKMASSLACLLLNFHVSVFLVQLLTPCSA) are cleaved as a signal peptide. 2 consecutive Ig-like V-type domains span residues 30–139 (QFSV…KALV) and 145–236 (ALGS…ASIS). Residues 30-248 (QFSVLGPSGP…DPFFTSAQPW (219 aa)) are Extracellular-facing. Cystine bridges form between C52-C126 and C166-C220. N115 carries N-linked (GlcNAc...) asparagine glycosylation. Residues 249–269 (IAALAGTLPISLLLLAGASYF) form a helical membrane-spanning segment. Residues 270 to 585 (LWRQQKEKIA…KPQACTEALY (316 aa)) are Cytoplasmic-facing. The B30.2/SPRY domain maps to 322–518 (RGEKSLAYHE…LTICPTPKEV (197 aa)). The disordered stretch occupies residues 560–585 (AGAEGVSPSTTTSQNHKPQACTEALY). The span at 566–576 (SPSTTTSQNHK) shows a compositional bias: polar residues.

The protein belongs to the immunoglobulin superfamily. BTN/MOG family.

The protein resides in the membrane. This is Butyrophilin subfamily 3 member A3 (BTN3A3) from Pongo abelii (Sumatran orangutan).